The sequence spans 1102 residues: ATP-dependent DNA helicase MPH1 (1102 aa).

The segment at 19–55 (ALDKPATSGLHSREQEQQRDISNATPHTSTDLELEDF) is disordered. Residues 38 to 49 (DISNATPHTSTD) show a composition bias toward polar residues. The 169-residue stretch at 147 to 315 (IVKNGLFNNT…DVIDNLGVSH (169 aa)) folds into the Helicase ATP-binding domain. Residue 160 to 167 (LPTGLGKT) coordinates ATP. Positions 263–266 (DEAH) match the DEAH box motif. Residues 490–651 (NLLNYFMDAG…GSRFNFRHDL (162 aa)) enclose the Helicase C-terminal domain. 4 disordered regions span residues 672–702 (PIENTQDTSLPEPKARSTRGKKASKKKFNMP), 720–743 (ASKTKAKPNKSPKKAESKETDEIS), 818–837 (SQGIETRHTKPHGDTDKSRY), and 858–1102 (SGRK…SESG). Residues 687–699 (RSTRGKKASKKKF) show a composition bias toward basic residues. Residues 822–837 (ETRHTKPHGDTDKSRY) show a composition bias toward basic and acidic residues. The segment covering 1003 to 1019 (SSGAASKSGSTASTAAK) has biased composition (low complexity). Acidic residues predominate over residues 1069–1082 (SDDDDDDNDDEDDV).

Belongs to the DEAD box helicase family. DEAH subfamily. FANCM sub-subfamily. In terms of assembly, interacts with the MHF histone-fold complex to form the FANCM-MHF complex.

The protein resides in the nucleus. It carries out the reaction ATP + H2O = ADP + phosphate + H(+). Its function is as follows. ATP-dependent DNA helicase involved in DNA damage repair by homologous recombination and in genome maintenance. Capable of unwinding D-loops. Plays a role in limiting crossover recombinants during mitotic DNA double-strand break (DSB) repair. Component of a FANCM-MHF complex which promotes gene conversion at blocked replication forks, probably by reversal of the stalled fork. The chain is ATP-dependent DNA helicase MPH1 from Pyricularia oryzae (strain 70-15 / ATCC MYA-4617 / FGSC 8958) (Rice blast fungus).